The following is a 611-amino-acid chain: Elongation factor 4 (611 aa).

The region spanning 12-194 (SRIRNFSIIA…QIVEKVPAPA (183 aa)) is the tr-type G domain. GTP is bound by residues 24–29 (DHGKST) and 141–144 (NKID).

Belongs to the TRAFAC class translation factor GTPase superfamily. Classic translation factor GTPase family. LepA subfamily.

The protein resides in the cell membrane. The enzyme catalyses GTP + H2O = GDP + phosphate + H(+). In terms of biological role, required for accurate and efficient protein synthesis under certain stress conditions. May act as a fidelity factor of the translation reaction, by catalyzing a one-codon backward translocation of tRNAs on improperly translocated ribosomes. Back-translocation proceeds from a post-translocation (POST) complex to a pre-translocation (PRE) complex, thus giving elongation factor G a second chance to translocate the tRNAs correctly. Binds to ribosomes in a GTP-dependent manner. This is Elongation factor 4 from Bacillus velezensis (strain DSM 23117 / BGSC 10A6 / LMG 26770 / FZB42) (Bacillus amyloliquefaciens subsp. plantarum).